We begin with the raw amino-acid sequence, 362 residues long: Phosphoserine aminotransferase (362 aa).

The L-glutamate site is built by Ser-9 and Arg-42. Pyridoxal 5'-phosphate is bound by residues 76–77 (GR), Trp-102, Thr-153, Asp-174, and Gln-197. Lys-198 is modified (N6-(pyridoxal phosphate)lysine). 239–240 (NT) provides a ligand contact to pyridoxal 5'-phosphate.

The protein belongs to the class-V pyridoxal-phosphate-dependent aminotransferase family. SerC subfamily. Homodimer. Pyridoxal 5'-phosphate is required as a cofactor.

It localises to the cytoplasm. The catalysed reaction is O-phospho-L-serine + 2-oxoglutarate = 3-phosphooxypyruvate + L-glutamate. It carries out the reaction 4-(phosphooxy)-L-threonine + 2-oxoglutarate = (R)-3-hydroxy-2-oxo-4-phosphooxybutanoate + L-glutamate. Its pathway is amino-acid biosynthesis; L-serine biosynthesis; L-serine from 3-phospho-D-glycerate: step 2/3. The protein operates within cofactor biosynthesis; pyridoxine 5'-phosphate biosynthesis; pyridoxine 5'-phosphate from D-erythrose 4-phosphate: step 3/5. In terms of biological role, catalyzes the reversible conversion of 3-phosphohydroxypyruvate to phosphoserine and of 3-hydroxy-2-oxo-4-phosphonooxybutanoate to phosphohydroxythreonine. The chain is Phosphoserine aminotransferase from Citrobacter koseri (strain ATCC BAA-895 / CDC 4225-83 / SGSC4696).